Consider the following 298-residue polypeptide: MANTTKTRTHLIGGFFGGLTSAVALQPLDLLKTRIQQHQSQSIWSIVKNSKGFSELWRGTLPSAIRTSLGSALYLSSLNLMRTAIAKSKTNYNDGASKSSLLPKLTTYENLISGALARGAVGYMTMPVTVIKVRYESTLYSYTSLSQAVKHIYQSERIPGFFRGFGPTLVRDAPYSGIYVLLYEKAKEVVPKLLPRKFIKFDKHGSYLTSTSTLVNSTSAILSACLATTITAPFDTIKTRMQLEPKRYTNVWFTFKSIIKNEGILKLFSGLSMRLTRKALSAGIAWGIYEELIKLNKF.

Solcar repeat units lie at residues 5–84 (TKTR…MRTA), 105–189 (LTTY…AKEV), and 211–295 (TSTL…LIKL). A run of 6 helical transmembrane segments spans residues 11 to 36 (LIGG…TRIQ), 59 to 85 (GTLP…RTAI), 111 to 136 (LISG…VRYE), 164 to 187 (GFGP…EKAK), 215 to 241 (VNST…KTRM), and 270 to 288 (GLSM…AWGI).

This sequence belongs to the mitochondrial carrier (TC 2.A.29) family. SLC25A38 subfamily.

The protein localises to the mitochondrion inner membrane. The enzyme catalyses glycine(in) = glycine(out). Mitochondrial glycine transporter that imports glycine into the mitochondrial matrix. Plays an important role in providing glycine for the first enzymatic step in heme biosynthesis, the condensation of glycine with succinyl-CoA to produce 5-aminolevulinate (ALA) in the mitochondrial matrix. The sequence is that of Mitochondrial glycine transporter from Vanderwaltozyma polyspora (strain ATCC 22028 / DSM 70294 / BCRC 21397 / CBS 2163 / NBRC 10782 / NRRL Y-8283 / UCD 57-17) (Kluyveromyces polysporus).